Here is a 153-residue protein sequence, read N- to C-terminus: Nuclear cap-binding protein subunit 2 (153 aa).

MRNA is bound by residues tyrosine 17, tyrosine 40, 109–113, 120–124, and 130–131; these read RTDWD, RQYGR, and QV. Positions 37 to 115 constitute an RRM domain; sequence CTLYVGNLSF…RIIRTDWDAG (79 aa).

Belongs to the RRM NCBP2 family. As to quaternary structure, component of the nuclear cap-binding complex (CBC), a heterodimer composed of ncbp1/cbp80 and ncbp2/cbp20 that interacts with m7GpppG-capped RNA.

The protein localises to the nucleus. It localises to the cytoplasm. Its function is as follows. Component of the cap-binding complex (CBC), which binds co-transcriptionally to the 5' cap of pre-mRNAs and is involved in various processes such as pre-mRNA splicing, translation regulation, nonsense-mediated mRNA decay, RNA-mediated gene silencing (RNAi) by microRNAs (miRNAs) and mRNA export. The CBC complex is involved in mRNA export from the nucleus, leading to the recruitment of the mRNA export machinery to the 5' end of mRNA and to mRNA export in a 5' to 3' direction through the nuclear pore. The CBC complex is also involved in mediating U snRNA and intronless mRNAs export from the nucleus. The CBC complex is essential for a pioneer round of mRNA translation, before steady state translation when the CBC complex is replaced by cytoplasmic cap-binding protein eIF4E. The pioneer round of mRNA translation mediated by the CBC complex plays a central role in nonsense-mediated mRNA decay (NMD), NMD only taking place in mRNAs bound to the CBC complex, but not on eIF4E-bound mRNAs. The CBC complex enhances NMD in mRNAs containing at least one exon-junction complex (EJC), promoting the interaction between upf1 and upf2. The CBC complex is also involved in 'failsafe' NMD, which is independent of the EJC complex, while it does not participate in Staufen-mediated mRNA decay (SMD). During cell proliferation, the CBC complex is also involved in microRNAs (miRNAs) biogenesis via its interaction with srrt/ars2, thereby being required for miRNA-mediated RNA interference. The CBC complex also acts as a negative regulator of parn, thereby acting as an inhibitor of mRNA deadenylation. In the CBC complex, ncbp2/cbp20 recognizes and binds capped RNAs (m7GpppG-capped RNA) but requires ncbp1/cbp80 to stabilize the movement of its N-terminal loop and lock the CBC into a high affinity cap-binding state with the cap structure. The conventional cap-binding complex with NCBP2 binds both small nuclear RNA (snRNA) and messenger (mRNA) and is involved in their export from the nucleus. The sequence is that of Nuclear cap-binding protein subunit 2 (ncbp2) from Xenopus tropicalis (Western clawed frog).